A 336-amino-acid polypeptide reads, in one-letter code: HTH-type transcriptional repressor PurR (336 aa).

In terms of domain architecture, HTH lacI-type spans 2–56; sequence ATIKDVAKMAGVSTTTVSHVINKTRFVAKDTEEAVLSAIKQLNYSPSAVARSLKV. The segment at residues 4-23 is a DNA-binding region (H-T-H motif); sequence IKDVAKMAGVSTTTVSHVIN. Residues 48–56 mediate DNA binding; sequence SAVARSLKV. Residues tyrosine 73, lysine 188, threonine 190, phenylalanine 219, and aspartate 273 each coordinate hypoxanthine.

Homodimer.

It functions in the pathway purine metabolism; purine nucleotide biosynthesis [regulation]. Is the main repressor of the genes involved in the de novo synthesis of purine nucleotides, regulating purB, purC, purEK, purF, purHD, purL, purMN and guaBA expression. PurR is allosterically activated to bind its cognate DNA by binding the purine corepressors, hypoxanthine or guanine, thereby effecting transcription repression. The polypeptide is HTH-type transcriptional repressor PurR (Haemophilus influenzae (strain 86-028NP)).